The following is a 219-amino-acid chain: PKHD-type hydroxylase Plav_0037 (219 aa).

One can recognise a Fe2OG dioxygenase domain in the interval 78-172; the sequence is NFIRILLSRY…RRAAVGWIRS (95 aa). 3 residues coordinate Fe cation: His-96, Asp-98, and His-153. Arg-163 lines the 2-oxoglutarate pocket.

Requires Fe(2+) as cofactor. L-ascorbate is required as a cofactor.

This Parvibaculum lavamentivorans (strain DS-1 / DSM 13023 / NCIMB 13966) protein is PKHD-type hydroxylase Plav_0037.